Reading from the N-terminus, the 940-residue chain is Isoleucine--tRNA ligase (940 aa).

The short motif at P58–H68 is the 'HIGH' region element. Residue E564 coordinates L-isoleucyl-5'-AMP. Positions K605 to S609 match the 'KMSKS' region motif. K608 serves as a coordination point for ATP. C903, C906, C923, and C926 together coordinate Zn(2+).

It belongs to the class-I aminoacyl-tRNA synthetase family. IleS type 1 subfamily. As to quaternary structure, monomer. Zn(2+) is required as a cofactor.

It is found in the cytoplasm. It carries out the reaction tRNA(Ile) + L-isoleucine + ATP = L-isoleucyl-tRNA(Ile) + AMP + diphosphate. Its function is as follows. Catalyzes the attachment of isoleucine to tRNA(Ile). As IleRS can inadvertently accommodate and process structurally similar amino acids such as valine, to avoid such errors it has two additional distinct tRNA(Ile)-dependent editing activities. One activity is designated as 'pretransfer' editing and involves the hydrolysis of activated Val-AMP. The other activity is designated 'posttransfer' editing and involves deacylation of mischarged Val-tRNA(Ile). The chain is Isoleucine--tRNA ligase from Shewanella sp. (strain MR-7).